The sequence spans 146 residues: Cytidine deaminase (146 aa).

The CMP/dCMP-type deaminase domain maps to 13 to 140; the sequence is EHVQRLLLSS…ELLPASFGPE (128 aa). Residue 54-56 coordinates substrate; the sequence is NIE. C65 lines the Zn(2+) pocket. Catalysis depends on E67, which acts as the Proton donor. The Zn(2+) site is built by C99 and C102.

Belongs to the cytidine and deoxycytidylate deaminase family. Homotetramer. It depends on Zn(2+) as a cofactor.

It carries out the reaction cytidine + H2O + H(+) = uridine + NH4(+). The catalysed reaction is 2'-deoxycytidine + H2O + H(+) = 2'-deoxyuridine + NH4(+). Its function is as follows. This enzyme scavenges exogenous and endogenous cytidine and 2'-deoxycytidine for UMP synthesis. The chain is Cytidine deaminase (Cda) from Mus musculus (Mouse).